A 62-amino-acid polypeptide reads, in one-letter code: Conotoxin Lt5.5 (62 aa).

The N-terminal stretch at M1–A22 is a signal peptide. Residues Q23–N48 constitute a propeptide that is removed on maturation.

This sequence belongs to the conotoxin T superfamily. Contains 2 disulfide bonds that can be either 'C1-C3, C2-C4' or 'C1-C4, C2-C3', since these disulfide connectivities have been observed for conotoxins with cysteine framework V (for examples, see AC P0DQQ7 and AC P81755). Expressed by the venom duct.

It is found in the secreted. In Conus litteratus (Lettered cone), this protein is Conotoxin Lt5.5.